Here is a 295-residue protein sequence, read N- to C-terminus: Deleted in azoospermia-like (295 aa).

Residues Met-1–Asn-10 show a composition bias toward polar residues. The tract at residues Met-1–Ala-25 is disordered. The segment covering Ser-11–Ala-25 has biased composition (low complexity). The RRM domain occupies Asn-40–Arg-115. The homodimerization stretch occupies residues Lys-80–Asn-132. Positions Ala-167 to Gln-190 constitute a DAZ domain. Tyr-276 is subject to Phosphotyrosine.

It belongs to the RRM DAZ family. As to quaternary structure, homodimer and heterodimer. Multiple DAZL RRMs can bind to a single RNA containing multiple GUU triplets. Forms a heterodimer with DAZ. Interacts with BOLL, DAZAP1 and DAZAP2. Interacts with PUM2. In terms of tissue distribution, testis specific.

It localises to the cytoplasm. The protein resides in the nucleus. RNA-binding protein, which is essential for gametogenesis in both males and females. Plays a central role during spermatogenesis. Acts by binding to the 3'-UTR of mRNA, specifically recognizing GUU triplets, and thereby regulating the translation of key transcripts. In Homo sapiens (Human), this protein is Deleted in azoospermia-like (DAZL).